Consider the following 323-residue polypeptide: Putative CRISPR-associated protein SSO1401 (323 aa).

In terms of assembly, sometimes seen associated with the aCascade ribonucleoprotein complex, minimally composed of Csa2 and Cas5a, which binds crRNA. Other probable components of aCascade in strain P1 are Cas6 and Csa5, while SSO1399, Cas5b (SSO1400) and SSO1401 have sometimes been seen weakly associated. The Csa2-Cas5a-crRNA complex also binds target DNA homologous to crRNA, probably forming an R-loop. Purified aCascade forms a filament about 6 nm in width.

Functionally, CRISPR (clustered regularly interspaced short palindromic repeat) is an adaptive immune system that provides protection against mobile genetic elements (viruses, transposable elements and conjugative plasmids). CRISPR clusters contain spacers, sequences complementary to antecedent mobile elements, and target invading nucleic acids. CRISPR clusters are transcribed and processed into CRISPR RNA (crRNA). This chain is Putative CRISPR-associated protein SSO1401, found in Saccharolobus solfataricus (strain ATCC 35092 / DSM 1617 / JCM 11322 / P2) (Sulfolobus solfataricus).